The chain runs to 398 residues: Galactose-3-O-sulfotransferase 2 (398 aa).

Residues 1-10 lie on the Cytoplasmic side of the membrane; sequence MMSMLGGLQR. Residues 11-31 traverse the membrane as a helical; Signal-anchor for type II membrane protein segment; sequence YFRVILLLLLALTLLLLAGFL. Over 32-398 the chain is Lumenal; sequence HSDLELDTPL…PLKNIPFLGA (367 aa). N-linked (GlcNAc...) asparagine glycosylation is found at asparagine 79, asparagine 132, asparagine 179, asparagine 287, asparagine 330, and asparagine 360.

The protein belongs to the galactose-3-O-sulfotransferase family. As to expression, ubiquitous. Detected in heart, stomach, colon, liver and spleen, in epithelial cells lining the lower to middle layer of the crypts in colonic mucosa, hepatocytes surrounding the central vein of the liver, extravillous cytotrophoblasts in the basal plate of the septum of the placenta, renal tubules of the kidney, and neuronal cells of the cerebral cortex.

Its subcellular location is the golgi apparatus. It localises to the golgi stack membrane. The protein operates within protein modification; carbohydrate sulfation. With respect to regulation, strongly inhibited by Cu(2+) and Zn(2+). Its function is as follows. Transfers a sulfate group to the hydroxyl group at C3 of non-reducing beta-galactosyl residues. Acts both on type 1 (Gal-beta-1,3-GlcNAc) and type 2 (Gal-beta-1,4-GlcNAc) chains with similar efficiency. The polypeptide is Galactose-3-O-sulfotransferase 2 (GAL3ST2) (Homo sapiens (Human)).